A 218-amino-acid polypeptide reads, in one-letter code: Peroxiredoxin-like 2A (218 aa).

The interval 3–101 (MWSIGAGAIG…DELGVPLYAV (99 aa)) is thioredoxin fold. Residues Cys74 and Cys77 each act as redox-active in the active site.

This sequence belongs to the peroxiredoxin-like PRXL2 family. PRXL2A subfamily.

It localises to the cytoplasm. The protein resides in the secreted. In terms of biological role, involved in redox regulation of the cell. Acts as an antioxidant. Inhibits TNFSF11-induced NFKB1 and JUN activation and osteoclast differentiation. May affect bone resorption and help to maintain bone mass. Acts as a negative regulator of macrophage-mediated inflammation by inhibiting macrophage production of inflammatory cytokines, probably through suppression of the MAPK signaling pathway. This chain is Peroxiredoxin-like 2A (PRXL2A), found in Bos taurus (Bovine).